A 144-amino-acid polypeptide reads, in one-letter code: Transcriptional regulator SlyA (144 aa).

One can recognise an HTH marR-type domain in the interval 2 to 135 (ESPLGSDLAR…LIKLVAKLEH (134 aa)). A DNA-binding region (H-T-H motif) is located at residues 49–72 (QIQLAKAIGIEQPSLVRTLDQLED).

It belongs to the SlyA family. As to quaternary structure, homodimer.

Functionally, transcription regulator that can specifically activate or repress expression of target genes. Required to activate expression of virulent genes. The sequence is that of Transcriptional regulator SlyA from Salmonella choleraesuis (strain SC-B67).